The chain runs to 1037 residues: Glycine dehydrogenase (decarboxylating) 1, mitochondrial (1037 aa).

The N-terminal 67 residues, 1–67 (MERARRLAYR…AFGRHQQTRS (67 aa)), are a transit peptide targeting the mitochondrion. The residue at position 98 (cysteine 98) is an S-glutathionyl cysteine; transient. S-glutathionyl cysteine is present on residues cysteine 402 and cysteine 463. Lysine 774 carries the N6-(pyridoxal phosphate)lysine modification. 3 positions are modified to S-glutathionyl cysteine; transient: cysteine 777, cysteine 943, and cysteine 1022.

It belongs to the GcvP family. In terms of assembly, homodimer. The glycine cleavage system is composed of four proteins: P, T, L and H. Requires pyridoxal 5'-phosphate as cofactor. Post-translationally, glutathionylated at Cys-98, Cys-777, Cys-943 and Cys-1022 after S-nitrosoglutathione treatment. In terms of processing, S-nitrosylated at unknown positions by nitric oxide. In terms of tissue distribution, expressed in leaves. Detected in roots, stems, flowers and siliques.

It localises to the mitochondrion. The catalysed reaction is N(6)-[(R)-lipoyl]-L-lysyl-[glycine-cleavage complex H protein] + glycine + H(+) = N(6)-[(R)-S(8)-aminomethyldihydrolipoyl]-L-lysyl-[glycine-cleavage complex H protein] + CO2. Inhibited by harpin, S-nitrosoglutathione (GSNO), nitric oxide, N-ethylmaleimide and 5,5'-dithiobis-(2-nitrobenzoic acid). In terms of biological role, the glycine decarboxylase (GDC) or glycine cleavage system catalyzes the degradation of glycine. The P protein binds the alpha-amino group of glycine through its pyridoxal phosphate cofactor; CO(2) is released and the remaining methylamine moiety is then transferred to the lipoamide cofactor of the H protein. The chain is Glycine dehydrogenase (decarboxylating) 1, mitochondrial (GLDP1) from Arabidopsis thaliana (Mouse-ear cress).